A 277-amino-acid chain; its full sequence is Shikimate dehydrogenase (NADP(+)) (277 aa).

Shikimate is bound by residues 15–17 (SLS) and T62. The active-site Proton acceptor is the K66. The shikimate site is built by N87 and D102. Residues 127–131 (GAGGA), 151–156 (NRTVDK), and I219 contribute to the NADP(+) site. Y221 is a shikimate binding site. G242 contributes to the NADP(+) binding site.

It belongs to the shikimate dehydrogenase family. In terms of assembly, homodimer.

It catalyses the reaction shikimate + NADP(+) = 3-dehydroshikimate + NADPH + H(+). The protein operates within metabolic intermediate biosynthesis; chorismate biosynthesis; chorismate from D-erythrose 4-phosphate and phosphoenolpyruvate: step 4/7. Its function is as follows. Involved in the biosynthesis of the chorismate, which leads to the biosynthesis of aromatic amino acids. Catalyzes the reversible NADPH linked reduction of 3-dehydroshikimate (DHSA) to yield shikimate (SA). The protein is Shikimate dehydrogenase (NADP(+)) of Bacillus cereus (strain ZK / E33L).